A 267-amino-acid polypeptide reads, in one-letter code: Probable ribosomal RNA small subunit methyltransferase A (267 aa).

S-adenosyl-L-methionine contacts are provided by Leu-12, Gly-37, Glu-58, Asp-83, and Asn-100.

The protein belongs to the class I-like SAM-binding methyltransferase superfamily. rRNA adenine N(6)-methyltransferase family. RsmA subfamily.

The protein resides in the cytoplasm. Specifically dimethylates two adjacent adenosines in the loop of a conserved hairpin near the 3'-end of 16S rRNA in the 30S particle. May play a critical role in biogenesis of 30S subunits. This Methanococcus vannielii (strain ATCC 35089 / DSM 1224 / JCM 13029 / OCM 148 / SB) protein is Probable ribosomal RNA small subunit methyltransferase A.